The following is a 182-amino-acid chain: Oligoribonuclease (182 aa).

Positions leucine 8–leucine 171 constitute an Exonuclease domain. Residue tyrosine 129 is part of the active site.

This sequence belongs to the oligoribonuclease family.

It localises to the cytoplasm. In terms of biological role, 3'-to-5' exoribonuclease specific for small oligoribonucleotides. The chain is Oligoribonuclease from Thiobacillus denitrificans (strain ATCC 25259 / T1).